We begin with the raw amino-acid sequence, 323 residues long: Olfactory receptor 52B2 (323 aa).

Topologically, residues 1–27 (MSHTNVTIFHPAVFVLPGIPGLEAYHI) are extracellular. Residue Asn-5 is glycosylated (N-linked (GlcNAc...) asparagine). A helical membrane pass occupies residues 28–48 (WLSIPLCLIYITAVLGNSILI). Over 49 to 56 (VVIVMERN) the chain is Cytoplasmic. Residues 57–77 (LHVPMYFFLSMLAVMDILLST) traverse the membrane as a helical segment. Residues 78 to 101 (TTVPKALAIFWLQAHNIAFDACVT) are Extracellular-facing. Cys-99 and Cys-191 are disulfide-bonded. The chain crosses the membrane as a helical span at residues 102 to 122 (QGFFVHMMFVGESAILLAMAF). At 123–141 (DRFVAICAPLRYTTVLTWP) the chain is on the cytoplasmic side. Residues 142-162 (VVGRIALAVITRSFCIIFPVI) form a helical membrane-spanning segment. The Extracellular segment spans residues 163 to 198 (FLLKRLPFCLTNIVPHSYCEHIGVARLACADITVNI). A helical transmembrane segment spans residues 199 to 219 (WYGFSVPIVMVILDVILIAVS). At 220-239 (YSLILRAVFRLPSQDARHKA) the chain is on the cytoplasmic side. Residues 240–260 (LSTCGSHLCVILMFYVPSFFT) traverse the membrane as a helical segment. The Extracellular segment spans residues 261–275 (LLTHHFGRNIPQHVH). The helical transmembrane segment at 276 to 296 (ILLANLYVAVPPMLNPIVYGV) threads the bilayer. Topologically, residues 297–323 (KTKQIREGVAHRFFDIKTWCCTSPLGS) are cytoplasmic.

This sequence belongs to the G-protein coupled receptor 1 family.

Its subcellular location is the cell membrane. In terms of biological role, odorant receptor. This is Olfactory receptor 52B2 (OR52B2) from Homo sapiens (Human).